Here is a 580-residue protein sequence, read N- to C-terminus: Sensor histidine kinase YvrG (580 aa).

Residues 1-6 (MRLRWK) are Cytoplasmic-facing. The chain crosses the membrane as a helical span at residues 7–27 (FLFHFFGQMLIVILLLTVMLV). Topologically, residues 28–261 (ASFFYLDARF…KSFLKVVLKA (234 aa)) are extracellular. The helical transmembrane segment at 262–282 (MFLVMAVLFMYIIWMTVWYMF) threads the bilayer. Residues 283-580 (RFGLPIFHTI…TVITILFKKQ (298 aa)) are Cytoplasmic-facing. The Histidine kinase domain occupies 363 to 580 (GLSHDLKTPL…TVITILFKKQ (218 aa)). The residue at position 366 (histidine 366) is a Phosphohistidine; by autocatalysis.

It localises to the cell membrane. The catalysed reaction is ATP + protein L-histidine = ADP + protein N-phospho-L-histidine.. Functionally, member of the two-component regulatory system YvrG/YvrH that positively regulates 7 transcriptional units (wprA, wapA-yxxG, dltABCDE, sunA, sunT-bdbA-yolJ-bdbB, sigO-rsoA, and sigX-rsiX), and negatively regulates the lytABC operon. Probably activates YvrH by phosphorylation. In Bacillus subtilis (strain 168), this protein is Sensor histidine kinase YvrG (yvrG).